A 204-amino-acid chain; its full sequence is Small ribosomal subunit protein uS4 (204 aa).

In terms of domain architecture, S4 RNA-binding spans serine 93–glutamate 156.

This sequence belongs to the universal ribosomal protein uS4 family. In terms of assembly, part of the 30S ribosomal subunit. Contacts protein S5. The interaction surface between S4 and S5 is involved in control of translational fidelity.

Its function is as follows. One of the primary rRNA binding proteins, it binds directly to 16S rRNA where it nucleates assembly of the body of the 30S subunit. With S5 and S12 plays an important role in translational accuracy. This is Small ribosomal subunit protein uS4 from Wolbachia pipientis wMel.